The sequence spans 317 residues: tRNA dimethylallyltransferase (317 aa).

14-21 (GPTAVGKT) provides a ligand contact to ATP. A substrate-binding site is contributed by 16–21 (TAVGKT). Positions 39–42 (DSMQ) are interaction with substrate tRNA.

Belongs to the IPP transferase family. As to quaternary structure, monomer. Mg(2+) is required as a cofactor.

It carries out the reaction adenosine(37) in tRNA + dimethylallyl diphosphate = N(6)-dimethylallyladenosine(37) in tRNA + diphosphate. Catalyzes the transfer of a dimethylallyl group onto the adenine at position 37 in tRNAs that read codons beginning with uridine, leading to the formation of N6-(dimethylallyl)adenosine (i(6)A). The polypeptide is tRNA dimethylallyltransferase (Bacillus cereus (strain ATCC 10987 / NRS 248)).